The sequence spans 161 residues: MTQLTHFDTAGQAHMVDVGDKASTHRVAVATGTITMLPDTFALVRDGNAKKGDVLGIARVAAIMATKRTADLIPLCHPIGLTKVAVDFALDEAGSSITCTVRTETRGQTGVEMEALTGVQVALLTIYDMCKAVDRGMVMGNVKLLEKHGGKSGDWVSTPAG.

Residues 75-77 and 113-114 each bind substrate; these read LCH and ME. The active site involves D128.

The protein belongs to the MoaC family. Homohexamer; trimer of dimers.

The catalysed reaction is (8S)-3',8-cyclo-7,8-dihydroguanosine 5'-triphosphate = cyclic pyranopterin phosphate + diphosphate. It participates in cofactor biosynthesis; molybdopterin biosynthesis. Its function is as follows. Catalyzes the conversion of (8S)-3',8-cyclo-7,8-dihydroguanosine 5'-triphosphate to cyclic pyranopterin monophosphate (cPMP). The polypeptide is Cyclic pyranopterin monophosphate synthase (Cupriavidus pinatubonensis (strain JMP 134 / LMG 1197) (Cupriavidus necator (strain JMP 134))).